The primary structure comprises 359 residues: ATPase ASNA1 homolog (359 aa).

23–30 (KGGVGKTT) is an ATP binding site. Residue Asp63 is part of the active site. Residues Glu252 and Asn279 each coordinate ATP. Cys291 and Cys294 together coordinate Zn(2+).

It belongs to the arsA ATPase family. In terms of assembly, homodimer.

It is found in the cytoplasm. Its subcellular location is the endoplasmic reticulum. In terms of biological role, ATPase required for the post-translational delivery of tail-anchored (TA) proteins to the endoplasmic reticulum. Recognizes and selectively binds the transmembrane domain of TA proteins in the cytosol. This complex then targets to the endoplasmic reticulum by membrane-bound receptors, where the tail-anchored protein is released for insertion. This process is regulated by ATP binding and hydrolysis. ATP binding drives the homodimer towards the closed dimer state, facilitating recognition of newly synthesized TA membrane proteins. ATP hydrolysis is required for insertion. Subsequently, the homodimer reverts towards the open dimer state, lowering its affinity for the membrane-bound receptor, and returning it to the cytosol to initiate a new round of targeting. This is ATPase ASNA1 homolog from Trypanosoma cruzi (strain CL Brener).